A 271-amino-acid chain; its full sequence is 4-hydroxy-tetrahydrodipicolinate reductase (271 aa).

NAD(+) is bound by residues 10–15 (GAGGRM), E36, 100–102 (GTT), and 124–127 (SGNM). H157 (proton donor/acceptor) is an active-site residue. (S)-2,3,4,5-tetrahydrodipicolinate is bound at residue H158. K161 acts as the Proton donor in catalysis. Residue 167–168 (GT) coordinates (S)-2,3,4,5-tetrahydrodipicolinate.

Belongs to the DapB family.

The protein resides in the cytoplasm. The catalysed reaction is (S)-2,3,4,5-tetrahydrodipicolinate + NAD(+) + H2O = (2S,4S)-4-hydroxy-2,3,4,5-tetrahydrodipicolinate + NADH + H(+). It catalyses the reaction (S)-2,3,4,5-tetrahydrodipicolinate + NADP(+) + H2O = (2S,4S)-4-hydroxy-2,3,4,5-tetrahydrodipicolinate + NADPH + H(+). It participates in amino-acid biosynthesis; L-lysine biosynthesis via DAP pathway; (S)-tetrahydrodipicolinate from L-aspartate: step 4/4. In terms of biological role, catalyzes the conversion of 4-hydroxy-tetrahydrodipicolinate (HTPA) to tetrahydrodipicolinate. This is 4-hydroxy-tetrahydrodipicolinate reductase from Rhodopseudomonas palustris (strain ATCC BAA-98 / CGA009).